The primary structure comprises 132 residues: Small ribosomal subunit protein bS6 (132 aa).

The tract at residues 96–132 (HAEGPSIQMQKRDERERGDRGDRPDRGDRGERGGFRR) is disordered. Basic and acidic residues predominate over residues 105-132 (QKRDERERGDRGDRPDRGDRGERGGFRR).

It belongs to the bacterial ribosomal protein bS6 family.

Binds together with bS18 to 16S ribosomal RNA. This chain is Small ribosomal subunit protein bS6, found in Cereibacter sphaeroides (strain ATCC 17025 / ATH 2.4.3) (Rhodobacter sphaeroides).